Here is a 502-residue protein sequence, read N- to C-terminus: Lysine--tRNA ligase (502 aa).

Mg(2+) contacts are provided by E413 and E420.

Belongs to the class-II aminoacyl-tRNA synthetase family. Homodimer. It depends on Mg(2+) as a cofactor.

Its subcellular location is the cytoplasm. The enzyme catalyses tRNA(Lys) + L-lysine + ATP = L-lysyl-tRNA(Lys) + AMP + diphosphate. In Aromatoleum aromaticum (strain DSM 19018 / LMG 30748 / EbN1) (Azoarcus sp. (strain EbN1)), this protein is Lysine--tRNA ligase.